The chain runs to 147 residues: Ponticulin-like protein C4 (147 aa).

The signal sequence occupies residues 1 to 20 (MKFTKSLLLLIVAVFASSNA). A lipid anchor (GPI-like-anchor amidated asparagine) is attached at asparagine 118. The N-linked (GlcNAc...) asparagine glycan is linked to asparagine 118. Residues 119–147 (SSESDSSDSTRIGASFALAAAALLSMIAL) constitute a propeptide, removed in mature form.

It belongs to the ponticulin family. Post-translationally, the GPI-like-anchor contains a phosphoceramide group, rather than a phosphatidyl group.

It localises to the cell membrane. This chain is Ponticulin-like protein C4 (ponC4), found in Dictyostelium discoideum (Social amoeba).